The primary structure comprises 464 residues: UDP-N-acetylmuramoyl-tripeptide--D-alanyl-D-alanine ligase (464 aa).

125-131 (GSNGKTT) lines the ATP pocket.

Belongs to the MurCDEF family. MurF subfamily.

It localises to the cytoplasm. The catalysed reaction is D-alanyl-D-alanine + UDP-N-acetyl-alpha-D-muramoyl-L-alanyl-gamma-D-glutamyl-meso-2,6-diaminopimelate + ATP = UDP-N-acetyl-alpha-D-muramoyl-L-alanyl-gamma-D-glutamyl-meso-2,6-diaminopimeloyl-D-alanyl-D-alanine + ADP + phosphate + H(+). It participates in cell wall biogenesis; peptidoglycan biosynthesis. Functionally, involved in cell wall formation. Catalyzes the final step in the synthesis of UDP-N-acetylmuramoyl-pentapeptide, the precursor of murein. The polypeptide is UDP-N-acetylmuramoyl-tripeptide--D-alanyl-D-alanine ligase (Borreliella burgdorferi (strain ATCC 35210 / DSM 4680 / CIP 102532 / B31) (Borrelia burgdorferi)).